The chain runs to 334 residues: tRNA-dihydrouridine(20/20a) synthase (334 aa).

Residues 17–19 (PMM) and glutamine 70 contribute to the FMN site. The active-site Proton donor is cysteine 100. Residues lysine 139, histidine 171, 211–213 (NGG), and 233–234 (GR) each bind FMN.

The protein belongs to the Dus family. DusA subfamily. FMN is required as a cofactor.

The enzyme catalyses 5,6-dihydrouridine(20) in tRNA + NADP(+) = uridine(20) in tRNA + NADPH + H(+). It carries out the reaction 5,6-dihydrouridine(20) in tRNA + NAD(+) = uridine(20) in tRNA + NADH + H(+). It catalyses the reaction 5,6-dihydrouridine(20a) in tRNA + NADP(+) = uridine(20a) in tRNA + NADPH + H(+). The catalysed reaction is 5,6-dihydrouridine(20a) in tRNA + NAD(+) = uridine(20a) in tRNA + NADH + H(+). Its function is as follows. Catalyzes the synthesis of 5,6-dihydrouridine (D), a modified base found in the D-loop of most tRNAs, via the reduction of the C5-C6 double bond in target uridines. Specifically modifies U20 and U20a in tRNAs. The polypeptide is tRNA-dihydrouridine(20/20a) synthase (dus2) (Synechocystis sp. (strain ATCC 27184 / PCC 6803 / Kazusa)).